We begin with the raw amino-acid sequence, 364 residues long: Apelin receptor (364 aa).

At Met-1–Leu-39 the chain is on the extracellular side. Asn-21 is a glycosylation site (N-linked (GlcNAc...) asparagine). Disulfide bonds link Cys-28-Cys-288 and Cys-110-Cys-187. A helical transmembrane segment spans residues Leu-40–Phe-60. Residues Thr-61–Asn-78 lie on the Cytoplasmic side of the membrane. The helical transmembrane segment at Leu-79–Leu-99 threads the bilayer. Residues Gly-100–Leu-112 lie on the Extracellular side of the membrane. The helical transmembrane segment at Ser-113 to Phe-133 threads the bilayer. Residues Asp-134–Ser-153 lie on the Cytoplasmic side of the membrane. Residues Ile-154–Ile-174 form a helical membrane-spanning segment. The Extracellular portion of the chain corresponds to Leu-175–Asn-201. A glycan (N-linked (GlcNAc...) asparagine) is linked at Asn-183. The chain crosses the membrane as a helical span at residues Phe-202–Leu-222. The Cytoplasmic portion of the chain corresponds to Met-223 to Arg-250. The helical transmembrane segment at Leu-251 to Ile-271 threads the bilayer. At Leu-272–His-298 the chain is on the extracellular side. A helical membrane pass occupies residues Pro-299 to Phe-319. Over Asp-320 to Val-364 the chain is Cytoplasmic.

The protein belongs to the G-protein coupled receptor 1 family.

The protein localises to the cell membrane. In terms of biological role, g protein-coupled receptor for peptide hormones apelin (apln) and apelin receptor early endogenous ligand (apela), that plays a role in the regulation of normal cardiovascular function and fluid homeostasis. When acting as apelin receptor, activates both G(i) protein pathway that inhibits adenylate cyclase activity, and the beta-arrestin pathway that promotes internalization of the receptor. Also functions as mechanoreceptor that is activated by pathological stimuli in a G-protein-independent fashion to induce beta-arrestin signaling, hence eliciting cardiac hypertrophy. However, the presence of apelin ligand blunts cardiac hypertrophic induction from APLNR/APJ on response to pathological stimuli. Plays a key role in early development such as gastrulation, blood vessels formation and heart morphogenesis by acting as a receptor for apela hormone, promoting endoderm and mesendoderm cell migration and regulating the migration of cells fated to become myocardial progenitors, respectively. Promotes angioblast migration toward the embryonic midline, i.e. the position of the future vessel formation, during vasculogenesis. May promote sinus venosus (SV)-derived endothelial cells migration into the developing heart to promote coronary blood vessel development. Required for cardiovascular development, particularly for intersomitic vein angiogenesis. Plays also a role in various processes in adults such as regulation of blood vessel formation, blood pressure, heart contractility, and heart failure. Acts upstream of the i/o type of G-alpha proteins in the differentiation of endothelium, erythroid cells, myeloid cells and cardiomyocytes. This is Apelin receptor (aplnr) from Xenopus tropicalis (Western clawed frog).